A 189-amino-acid polypeptide reads, in one-letter code: MAPTSAFLTALVLLSCNAICSLGCDLPQTHSLAHTRALRLLAQMRRISPFSCLDHRRDFGSPHEAFGGNQVQKAQAMALVHEMLQQTFQLFSTEGSAAAWNESLLHQFYTGLDQQLRDLEACVMQEAGLEGTPLLEEDSIRAVRKYFHRLTLYLQEKSYSPCAWEIVRAEVMRSFSSSRNLQDRLRKKE.

Residues 1–23 form the signal peptide; that stretch reads MAPTSAFLTALVLLSCNAICSLG. 2 disulfide bridges follow: Cys-24-Cys-122 and Cys-52-Cys-162.

Belongs to the alpha/beta interferon family. In terms of assembly, interacts with CR2.

The protein resides in the secreted. Produced by macrophages, IFN-alpha have antiviral activities. Interferon stimulates the production of two enzymes: a protein kinase and an oligoadenylate synthetase. The sequence is that of Interferon alpha-1 from Sus scrofa (Pig).